The sequence spans 539 residues: Efflux pump roqT (539 aa).

Positions 1–25 (MEKEVATDPLPQEIPSDAPDEGGSL) are disordered. 12 consecutive transmembrane segments (helical) span residues 36-56 (VSLTIALCLGVFCMSLDVTII), 108-128 (LFLFEVGSLVCGVTPTSVGLI), 133-153 (IAGLGAGGLFSGSLLIIAQTV), 160-180 (VFTALLGSMYGIASVAGPPLG), 191-211 (WCFYINLPIGAVTAAFVLFFF), 233-253 (IGSFFFLPAIVCLLLALQWGG), 262-282 (RIIVLFVLTGVLLLAFVAVQI), 305-325 (WFAITLNGAYFVFIYYLPIWF), 338-360 (VMNLPSIIAVVVVSIISGMLVTI), 362-384 (GYYNPVMIMSSVTLSIGAGLLST), 395-415 (IGYQILMGLGVGLGMQQPFMV), and 502-522 (AFYVGVALASLSCIGTIALEW).

Belongs to the major facilitator superfamily. TCR/Tet family.

It localises to the membrane. Efflux pump; part of the gene cluster that mediates the biosynthesis of the mycotoxins roquefortine C and meleagrin. This Penicillium rubens (strain ATCC 28089 / DSM 1075 / NRRL 1951 / Wisconsin 54-1255) (Penicillium chrysogenum) protein is Efflux pump roqT.